Here is a 710-residue protein sequence, read N- to C-terminus: Cleavage and polyadenylation factor complex subunit C74.02c (710 aa).

Polar residues predominate over residues 1–30 (MDNWNSVRNVSSDRQTSKTSENPPHTSNEY). Disordered stretches follow at residues 1–42 (MDNW…LSPD), 85–170 (ASSN…SDVN), and 361–510 (GPAM…SVSW). Residues 86–108 (SSNPSLISSGSSQTGSPSQSLSS) show a composition bias toward low complexity. Polar residues predominate over residues 109–170 (NKEPSSPGIS…EVPSSKSDVN (62 aa)). Low complexity-rich tracts occupy residues 361 to 383 (GPAMAPSASNKPSASSTTKSSNS) and 401 to 420 (LASSTKPTSASSSTKAPLTK). A compositionally biased stretch (polar residues) spans 421-430 (QQTNPSTPLS). A compositionally biased stretch (basic and acidic residues) spans 437–447 (KGREKEKDKDS).

Component of the cleavage and polyadenylation factor (CPF) complex.

It localises to the cytoplasm. The protein localises to the nucleus. RNA-binding component of the cleavage and polyadenylation factor (CPF) complex, which plays a key role in polyadenylation-dependent pre-mRNA 3'-end formation. Involved in poly(A) site recognition. May be involved in coupling transcription termination and mRNA 3'-end formation. This Schizosaccharomyces pombe (strain 972 / ATCC 24843) (Fission yeast) protein is Cleavage and polyadenylation factor complex subunit C74.02c.